Consider the following 577-residue polypeptide: Arginine--tRNA ligase (577 aa).

Residues 122-132 (PNVAKEMHVGH) carry the 'HIGH' region motif.

It belongs to the class-I aminoacyl-tRNA synthetase family. As to quaternary structure, monomer.

It is found in the cytoplasm. It catalyses the reaction tRNA(Arg) + L-arginine + ATP = L-arginyl-tRNA(Arg) + AMP + diphosphate. This is Arginine--tRNA ligase from Escherichia coli O9:H4 (strain HS).